An 85-amino-acid chain; its full sequence is uncharacterized protein (85 aa).

The signal sequence occupies residues 1–20 (MIKLFCVLAAFISINSACQS).

This is an uncharacterized protein from Invertebrate iridescent virus 6 (IIV-6).